The sequence spans 519 residues: NADH dehydrogenase (519 aa).

The interval 1 to 183 (MVLEPQIKSQ…YLNGESFTSG (183 aa)) is membrane-binding. Residues 184 to 519 (RMTVEEILAQ…TTPAESAAAK (336 aa)) form a catalytic region. 210–241 (DVLVVGGGPAGASSAIYAARKGIRTGIVADRF) contributes to the FAD binding site. Cys337 and Cys340 form a disulfide bridge. 349–379 (DVAVIGGGNSGVEAAIDLAGIVNHVTVLEFM) serves as a coordination point for NAD(+). 469-479 (TNVPGVFAAGD) provides a ligand contact to FAD.

It belongs to the class-II pyridine nucleotide-disulfide oxidoreductase family. Homodimer. Requires FAD as cofactor.

The protein resides in the cell membrane. The catalysed reaction is a ubiquinone + NADH + 5 H(+)(in) = a ubiquinol + NAD(+) + 4 H(+)(out). Functionally, transfer of electrons from NADH to the respiratory chain. The immediate electron acceptor for the enzyme is believed to be ubiquinone. The sequence is that of NADH dehydrogenase (ahpF) from Ferdinandcohnia aciditolerans (strain JCM 32973 / CCTCC AB 2017280 / YN-1) (Bacillus aciditolerans).